Reading from the N-terminus, the 223-residue chain is DNA mismatch repair protein MutH (223 aa).

It belongs to the MutH family.

The protein localises to the cytoplasm. Its function is as follows. Sequence-specific endonuclease that cleaves unmethylated GATC sequences. It is involved in DNA mismatch repair. The chain is DNA mismatch repair protein MutH from Shewanella baltica (strain OS195).